The following is a 210-amino-acid chain: Imidazoleglycerol-phosphate dehydratase (210 aa).

This sequence belongs to the imidazoleglycerol-phosphate dehydratase family.

Its subcellular location is the cytoplasm. It carries out the reaction D-erythro-1-(imidazol-4-yl)glycerol 3-phosphate = 3-(imidazol-4-yl)-2-oxopropyl phosphate + H2O. It functions in the pathway amino-acid biosynthesis; L-histidine biosynthesis; L-histidine from 5-phospho-alpha-D-ribose 1-diphosphate: step 6/9. This chain is Imidazoleglycerol-phosphate dehydratase, found in Acidovorax ebreus (strain TPSY) (Diaphorobacter sp. (strain TPSY)).